A 1453-amino-acid polypeptide reads, in one-letter code: NK-tumor recognition protein (1453 aa).

Positions 10–175 (HFDIEINREP…ADVRVIDCGV (166 aa)) constitute a PPIase cyclophilin-type domain. Residues 187–625 (KKRKKPTCSE…RWKPGQKPWK (439 aa)) form a disordered region. Positions 195 to 213 (SEGSDSSSRSSSSSESSSE) are enriched in low complexity. Residues 221–240 (IRRRRHKRRPKVRHAKKRRK) are compositionally biased toward basic residues. The span at 259–286 (YSERSDVNEKRSVDSNTKREKPVVRPEE) shows a compositional bias: basic and acidic residues. Residue lysine 323 forms a Glycyl lysine isopeptide (Lys-Gly) (interchain with G-Cter in SUMO2) linkage. Over residues 329–348 (SGRKIKGRGTIRYHTPPRSR) the composition is skewed to basic residues. Residues serine 379, serine 401, and serine 416 each carry the phosphoserine modification. The span at 382–402 (KWSKGDKLSDPCSSRWDERSL) shows a compositional bias: basic and acidic residues. Residues 403 to 421 (SQRSRSWSYNGYYSDLSTA) are compositionally biased toward polar residues. A compositionally biased stretch (basic residues) spans 425-460 (DGHHKKHRKEKKFKHKKKAKKQKHCRRHRQTKKRRI). The segment covering 514-531 (SSRDSYRSKSHSRSDSRG) has biased composition (basic and acidic residues). Composition is skewed to low complexity over residues 532–546 (SSRS…SRSL) and 554–565 (SSRSGPRRTSIS). Glycyl lysine isopeptide (Lys-Gly) (interchain with G-Cter in SUMO2) cross-links involve residues lysine 576 and lysine 579. Phosphoserine is present on serine 611. Lysine 637 participates in a covalent cross-link: Glycyl lysine isopeptide (Lys-Gly) (interchain with G-Cter in SUMO2). Serine 646 carries the phosphoserine modification. Over residues 651 to 661 (TNIKATVSSSS) the composition is skewed to polar residues. A disordered region spans residues 651-1453 (TNIKATVSSS…RSPSESSRYS (803 aa)). Glycyl lysine isopeptide (Lys-Gly) (interchain with G-Cter in SUMO2) cross-links involve residues lysine 654 and lysine 664. Composition is skewed to low complexity over residues 682-726 (RSSG…SSRS) and 736-749 (SQHS…SVSS). The segment covering 755–772 (AMFRSNRKKSVTSHKRHR) has biased composition (basic residues). Over residues 773–789 (SNSEKTLHSKYVRGREK) the composition is skewed to basic and acidic residues. Positions 799-809 (SRSSLDYSSDS) are enriched in low complexity. Composition is skewed to basic and acidic residues over residues 820 to 852 (PEKE…ECPR) and 859 to 868 (KDHSRDDSVS). Phosphoserine occurs at positions 880, 882, 884, and 900. The segment covering 887–902 (DVTKSRKSDPRRGSEK) has biased composition (basic and acidic residues). Residues 903-913 (EEGEASSDSES) show a composition bias toward acidic residues. Positions 948–958 (SSASESESSCS) are enriched in low complexity. The segment covering 966–982 (EPQKQKHSKDDLKGDHT) has biased composition (basic and acidic residues). Basic residues predominate over residues 983–1005 (KRAREKSKAKKDKKHKAPKRKQA). Residues 1030 to 1045 (DPKEKRHVSEKCEAVK) show a composition bias toward basic and acidic residues. Phosphoserine occurs at positions 1139 and 1148. Residues 1170–1180 (QESSMSESKTL) show a composition bias toward polar residues. The span at 1189-1199 (SSTSVTSPVET) shows a compositional bias: low complexity. A Phosphoserine modification is found at serine 1195. Glycyl lysine isopeptide (Lys-Gly) (interchain with G-Cter in SUMO2) cross-links involve residues lysine 1208 and lysine 1249. Positions 1303-1453 (RSPHRSRSKS…RSPSESSRYS (151 aa)) are arg/Ser tandem repeat-rich. Residues 1322–1346 (SVSYSHSRSRSRSSTSSYRSRSYSR) are compositionally biased toward low complexity. Positions 1369 to 1379 (HSHRTSSRSRS) are enriched in basic residues. Positions 1380–1401 (RSSSYDLHSRSRSYTYDSYYSR) are enriched in low complexity. Residues 1416-1426 (RGRSYNRRSRS) are compositionally biased toward basic residues.

It localises to the cell membrane. It catalyses the reaction [protein]-peptidylproline (omega=180) = [protein]-peptidylproline (omega=0). Its activity is regulated as follows. Inhibited by cyclosporin A (CsA). In terms of biological role, PPIase that catalyzes the cis-trans isomerization of proline imidic peptide bonds in oligopeptides and may therefore assist protein folding. Component of a putative tumor-recognition complex involved in the function of NK cells. In Mus musculus (Mouse), this protein is NK-tumor recognition protein.